The primary structure comprises 327 residues: E3 ubiquitin-protein ligase ZNRF4 (327 aa).

The N-terminal stretch at 1-28 (MARFAWTRVAPVALVTFWLVLSLSPTDA) is a signal peptide. At 29–150 (QVNLSSVDFL…EPCPDPECHP (122 aa)) the chain is on the lumenal side. The N-linked (GlcNAc...) asparagine glycan is linked to Asn-31. The helical transmembrane segment at 151–171 (VVVASWALARALALAASTLFV) threads the bilayer. Topologically, residues 172–327 (LRQLWPWVRG…AQSEATSELS (156 aa)) are cytoplasmic. The RING-type; atypical zinc-finger motif lies at 209-252 (CAICLDDYEEGERLKILPCAHAYHCRCIDPWFSRAAQRSCPLCK). Polar residues predominate over residues 256–265 (ASTHDGSTDG). The segment at 256 to 279 (ASTHDGSTDGSVGGEEPPLPGHRP) is disordered.

Interacts with CANX. In terms of tissue distribution, expressed exclusively in spermatids (at protein level).

Its subcellular location is the endoplasmic reticulum membrane. It catalyses the reaction S-ubiquitinyl-[E2 ubiquitin-conjugating enzyme]-L-cysteine + [acceptor protein]-L-lysine = [E2 ubiquitin-conjugating enzyme]-L-cysteine + N(6)-ubiquitinyl-[acceptor protein]-L-lysine.. It participates in protein modification; protein ubiquitination. Its function is as follows. E3 ubiquitin-protein ligase that acts as a negative regulator of NOD2 signaling by mediating ubiquitination and degradation of RIPK2. Also catalyzes ubiquitination and proteasomal degradation of CANX within the endoplasmic reticulum. Could have a role in spermatogenesis. The polypeptide is E3 ubiquitin-protein ligase ZNRF4 (Mus musculus (Mouse)).